Reading from the N-terminus, the 80-residue chain is Putative ATP-dependent Clp protease proteolytic subunit (80 aa).

His19 is a catalytic residue.

It belongs to the peptidase S14 family. In terms of assembly, component of the chloroplastic Clp protease core complex.

It is found in the plastid. The protein localises to the chloroplast. It carries out the reaction Hydrolysis of proteins to small peptides in the presence of ATP and magnesium. alpha-casein is the usual test substrate. In the absence of ATP, only oligopeptides shorter than five residues are hydrolyzed (such as succinyl-Leu-Tyr-|-NHMec, and Leu-Tyr-Leu-|-Tyr-Trp, in which cleavage of the -Tyr-|-Leu- and -Tyr-|-Trp bonds also occurs).. Functionally, cleaves peptides in various proteins in a process that requires ATP hydrolysis. Has a chymotrypsin-like activity. Plays a major role in the degradation of misfolded proteins. The sequence is that of Putative ATP-dependent Clp protease proteolytic subunit from Pinus strobus (Eastern white pine).